The sequence spans 350 residues: Hydroxymethylglutaryl-CoA synthase (350 aa).

2 residues coordinate (3S)-3-hydroxy-3-methylglutaryl-CoA: Asp-33 and Val-34. Glu-85 serves as the catalytic Proton donor/acceptor. (3S)-3-hydroxy-3-methylglutaryl-CoA contacts are provided by Cys-117 and Thr-158. Cys-117 (acyl-thioester intermediate) is an active-site residue. A CoA-binding site is contributed by Arg-204. (3S)-3-hydroxy-3-methylglutaryl-CoA is bound by residues Thr-206 and His-239. His-239 functions as the Proton donor/acceptor in the catalytic mechanism. Residue Lys-244 participates in CoA binding. The (3S)-3-hydroxy-3-methylglutaryl-CoA site is built by Lys-248, Asn-271, and Ser-301.

It belongs to the thiolase-like superfamily. Archaeal HMG-CoA synthase family. In terms of assembly, interacts with acetoacetyl-CoA thiolase that catalyzes the precedent step in the pathway and with a DUF35 protein. The acetoacetyl-CoA thiolase/HMG-CoA synthase complex channels the intermediate via a fused CoA-binding site, which allows for efficient coupling of the endergonic thiolase reaction with the exergonic HMGCS reaction.

The catalysed reaction is acetoacetyl-CoA + acetyl-CoA + H2O = (3S)-3-hydroxy-3-methylglutaryl-CoA + CoA + H(+). The protein operates within metabolic intermediate biosynthesis; (R)-mevalonate biosynthesis; (R)-mevalonate from acetyl-CoA: step 2/3. In terms of biological role, catalyzes the condensation of acetyl-CoA with acetoacetyl-CoA to form 3-hydroxy-3-methylglutaryl-CoA (HMG-CoA). Functions in the mevalonate (MVA) pathway leading to isopentenyl diphosphate (IPP), a key precursor for the biosynthesis of isoprenoid compounds that are building blocks of archaeal membrane lipids. In Methanopyrus kandleri (strain AV19 / DSM 6324 / JCM 9639 / NBRC 100938), this protein is Hydroxymethylglutaryl-CoA synthase.